The following is a 1714-amino-acid chain: Bifunctional glutamate/proline--tRNA ligase (1714 aa).

The interval 166-191 (DAKVKRSPQSSKEQTPAKTGERKQEG) is disordered. The interval 170-754 (KRSPQSSKEQ…ASELDSQISQ (585 aa)) is glutamate--tRNA ligase. Residues 172–182 (SPQSSKEQTPA) show a composition bias toward polar residues. Residues 209–220 (PPEASGYLHIGH) carry the 'HIGH' region motif. The short motif at 438 to 442 (VLSKR) is the 'KMSKS' region element. 3 disordered regions span residues 718–754 (PTSGLKVNAPDAKATKKASSPVSSSGQASELDSQISQ), 791–817 (GKDWKPGQTSASSAPVPAASSSSANDA), and 943–962 (GTTAPAPAAAPVKVKQEKNP). Composition is skewed to low complexity over residues 734 to 746 (KASSPVSSSGQAS) and 800 to 817 (SASSAPVPAASSSSANDA). WHEP-TRS domains follow at residues 744–800 (QASE…GQTS), 816–872 (DAVS…GTVP), 890–946 (SVAQ…GTTA), 969–1025 (TVNT…GTVA), and 1044–1100 (DVGS…DAKS). The 6 X 57 AA approximate repeats stretch occupies residues 755–1201 (QGDLVRDLKS…KPAKPVKKEP (447 aa)). Disordered regions lie at residues 1093 to 1119 (DWTPDAKSEPAVVKKEASPVSMASPAK) and 1168 to 1210 (FPVA…GAVK). Basic and acidic residues predominate over residues 1094 to 1109 (WTPDAKSEPAVVKKEA). Position 1110 is a phosphoserine (S1110). The WHEP-TRS 6 domain maps to 1118 to 1174 (AKDELTQEINAQGEKVRAAKGNKAAKEVIDAEVAKLLALKAKYKEVTGTDFPVAGRG). The segment covering 1172 to 1181 (GRGGGGGGGS) has biased composition (gly residues). The segment at 1207 to 1714 (GAVKKQTRLG…KFYTLFGRSY (508 aa)) is proline--tRNA ligase. Residues 1322 to 1324 (TSE) and R1353 contribute to the L-proline site. Residues R1353, E1355, R1364, T1365, Q1438, and T1441 each coordinate ATP. A Mg(2+)-binding site is contributed by Q1438. An L-proline-binding site is contributed by H1443. ATP-binding residues include T1476 and R1478. Zn(2+)-binding residues include C1648, C1653, and C1695.

The protein in the N-terminal section; belongs to the class-I aminoacyl-tRNA synthetase family. Glutamate--tRNA ligase type 2 subfamily. This sequence in the C-terminal section; belongs to the class-II aminoacyl-tRNA synthetase family. As to quaternary structure, component of the multisynthetase complex which is comprised of a bifunctional glutamyl-prolyl-tRNA synthetase, the monospecific isoleucyl, leucyl, glutaminyl, methionyl, lysyl, arginyl, and aspartyl-tRNA synthetases as well as three auxiliary proteins, p18, p48 and p43.

The catalysed reaction is tRNA(Glu) + L-glutamate + ATP = L-glutamyl-tRNA(Glu) + AMP + diphosphate. It carries out the reaction tRNA(Pro) + L-proline + ATP = L-prolyl-tRNA(Pro) + AMP + diphosphate. Functionally, catalyzes the attachment of both L-glutamate and L-proline to their cognate tRNAs in a two-step reaction where the amino acid is first activated by ATP to form a covalent intermediate with AMP. Subsequently, the activated amino acid is transferred to the acceptor end of the cognate tRNA to form L-glutamyl-tRNA(Glu) and L-prolyl-tRNA(Pro). This Drosophila melanogaster (Fruit fly) protein is Bifunctional glutamate/proline--tRNA ligase.